The following is a 347-amino-acid chain: Phenylalanine--tRNA ligase alpha subunit (347 aa).

A Mg(2+)-binding site is contributed by Glu268.

The protein belongs to the class-II aminoacyl-tRNA synthetase family. Phe-tRNA synthetase alpha subunit type 1 subfamily. As to quaternary structure, tetramer of two alpha and two beta subunits. The cofactor is Mg(2+).

The protein localises to the cytoplasm. It carries out the reaction tRNA(Phe) + L-phenylalanine + ATP = L-phenylalanyl-tRNA(Phe) + AMP + diphosphate + H(+). In Leptothrix cholodnii (strain ATCC 51168 / LMG 8142 / SP-6) (Leptothrix discophora (strain SP-6)), this protein is Phenylalanine--tRNA ligase alpha subunit.